An 875-amino-acid chain; its full sequence is Probable inorganic carbon transporter subunit DabA (875 aa).

4 residues coordinate Zn(2+): Cys-399, Asp-401, His-581, and Cys-596.

This sequence belongs to the inorganic carbon transporter (TC 9.A.2) DabA family. In terms of assembly, forms a complex with DabB. Zn(2+) serves as cofactor.

Its subcellular location is the cell membrane. Functionally, part of an energy-coupled inorganic carbon pump. In Bacillus thuringiensis (strain Al Hakam), this protein is Probable inorganic carbon transporter subunit DabA.